The primary structure comprises 196 residues: ATP-dependent Clp protease proteolytic subunit (196 aa).

Residue serine 101 is the Nucleophile of the active site. Histidine 126 is a catalytic residue.

The protein belongs to the peptidase S14 family. Component of the chloroplastic Clp protease core complex.

It localises to the plastid. Its subcellular location is the chloroplast stroma. The enzyme catalyses Hydrolysis of proteins to small peptides in the presence of ATP and magnesium. alpha-casein is the usual test substrate. In the absence of ATP, only oligopeptides shorter than five residues are hydrolyzed (such as succinyl-Leu-Tyr-|-NHMec, and Leu-Tyr-Leu-|-Tyr-Trp, in which cleavage of the -Tyr-|-Leu- and -Tyr-|-Trp bonds also occurs).. Its function is as follows. Cleaves peptides in various proteins in a process that requires ATP hydrolysis. Has a chymotrypsin-like activity. Plays a major role in the degradation of misfolded proteins. This chain is ATP-dependent Clp protease proteolytic subunit, found in Pleurastrum terricola (Filamentous green alga).